The sequence spans 572 residues: Arginine--tRNA ligase (572 aa).

Residues 122–132 (PNLAKEMHVGH) carry the 'HIGH' region motif.

Belongs to the class-I aminoacyl-tRNA synthetase family. As to quaternary structure, monomer.

The protein resides in the cytoplasm. The enzyme catalyses tRNA(Arg) + L-arginine + ATP = L-arginyl-tRNA(Arg) + AMP + diphosphate. The chain is Arginine--tRNA ligase from Neisseria meningitidis serogroup C / serotype 2a (strain ATCC 700532 / DSM 15464 / FAM18).